The following is a 169-amino-acid chain: Crossover junction endodeoxyribonuclease RuvC (169 aa).

Residues D11, E71, and H143 contribute to the active site. 3 residues coordinate Mg(2+): D11, E71, and H143.

It belongs to the RuvC family. As to quaternary structure, homodimer which binds Holliday junction (HJ) DNA. The HJ becomes 2-fold symmetrical on binding to RuvC with unstacked arms; it has a different conformation from HJ DNA in complex with RuvA. In the full resolvosome a probable DNA-RuvA(4)-RuvB(12)-RuvC(2) complex forms which resolves the HJ. The cofactor is Mg(2+).

The protein localises to the cytoplasm. The enzyme catalyses Endonucleolytic cleavage at a junction such as a reciprocal single-stranded crossover between two homologous DNA duplexes (Holliday junction).. The RuvA-RuvB-RuvC complex processes Holliday junction (HJ) DNA during genetic recombination and DNA repair. Endonuclease that resolves HJ intermediates. Cleaves cruciform DNA by making single-stranded nicks across the HJ at symmetrical positions within the homologous arms, yielding a 5'-phosphate and a 3'-hydroxyl group; requires a central core of homology in the junction. The consensus cleavage sequence is 5'-(A/T)TT(C/G)-3'. Cleavage occurs on the 3'-side of the TT dinucleotide at the point of strand exchange. HJ branch migration catalyzed by RuvA-RuvB allows RuvC to scan DNA until it finds its consensus sequence, where it cleaves and resolves the cruciform DNA. The sequence is that of Crossover junction endodeoxyribonuclease RuvC from Mesorhizobium japonicum (strain LMG 29417 / CECT 9101 / MAFF 303099) (Mesorhizobium loti (strain MAFF 303099)).